The chain runs to 374 residues: Flagellar P-ring protein (374 aa).

Residues 1–29 (MRRVRTTRLFQVACAAIVALASSAMSAHA) form the signal peptide.

It belongs to the FlgI family. As to quaternary structure, the basal body constitutes a major portion of the flagellar organelle and consists of four rings (L,P,S, and M) mounted on a central rod.

It localises to the periplasm. The protein resides in the bacterial flagellum basal body. Functionally, assembles around the rod to form the L-ring and probably protects the motor/basal body from shearing forces during rotation. The polypeptide is Flagellar P-ring protein (Bradyrhizobium sp. (strain BTAi1 / ATCC BAA-1182)).